A 250-amino-acid polypeptide reads, in one-letter code: Small ribosomal subunit protein uS2 (250 aa).

The protein belongs to the universal ribosomal protein uS2 family.

The protein is Small ribosomal subunit protein uS2 of Acidovorax ebreus (strain TPSY) (Diaphorobacter sp. (strain TPSY)).